The sequence spans 610 residues: UvrABC system protein C (610 aa).

The region spanning 16–94 (HQPGVYRMYN…IKQYLPKYNV (79 aa)) is the GIY-YIG domain. Residues 204–239 (QQVLKQLIEKMEVASQQLRFEDAAKFRDQIQAIRRV) enclose the UVR domain.

It belongs to the UvrC family. In terms of assembly, interacts with UvrB in an incision complex.

Its subcellular location is the cytoplasm. The UvrABC repair system catalyzes the recognition and processing of DNA lesions. UvrC both incises the 5' and 3' sides of the lesion. The N-terminal half is responsible for the 3' incision and the C-terminal half is responsible for the 5' incision. In Vibrio parahaemolyticus serotype O3:K6 (strain RIMD 2210633), this protein is UvrABC system protein C.